Reading from the N-terminus, the 491-residue chain is NADH-ubiquinone oxidoreductase chain 4 (491 aa).

Transmembrane regions (helical) follow at residues 2–22 (IFHK…IINV), 37–57 (ALEW…AFDM), 89–109 (ISLF…LISW), 114–134 (FLLK…MGVF), 139–159 (LLLF…LIGV), 169–189 (ASYY…LGIF), 215–235 (WIFA…PFHI), 245–265 (PVSG…YGFL), 271–291 (ILPA…VIAI), 308–328 (IAYS…THTI), 332–352 (VAAV…FIAV), 372–392 (FSMP…MAIP), 412–432 (IVIG…SLYL), and 457–477 (IAIS…SLII).

This sequence belongs to the complex I subunit 4 family.

The protein localises to the mitochondrion membrane. The catalysed reaction is a ubiquinone + NADH + 5 H(+)(in) = a ubiquinol + NAD(+) + 4 H(+)(out). Its function is as follows. Core subunit of the mitochondrial membrane respiratory chain NADH dehydrogenase (Complex I) that is believed to belong to the minimal assembly required for catalysis. Complex I functions in the transfer of electrons from NADH to the respiratory chain. The immediate electron acceptor for the enzyme is believed to be ubiquinone. This Metridium senile (Brown sea anemone) protein is NADH-ubiquinone oxidoreductase chain 4 (ND4).